We begin with the raw amino-acid sequence, 205 residues long: Guanylate kinase (205 aa).

The 179-residue stretch at 6–184 folds into the Guanylate kinase-like domain; that stretch reads GLLLVVSGPS…SAKEIEGIIS (179 aa). Position 13 to 20 (13 to 20) interacts with ATP; the sequence is GPSGAGKG.

The protein belongs to the guanylate kinase family.

It localises to the cytoplasm. It carries out the reaction GMP + ATP = GDP + ADP. Functionally, essential for recycling GMP and indirectly, cGMP. In Clostridioides difficile (strain 630) (Peptoclostridium difficile), this protein is Guanylate kinase.